The primary structure comprises 467 residues: Probable receptor-like protein kinase At3g17420 (467 aa).

Positions 1 to 35 are cleaved as a signal peptide; it reads MTSQLKRTLTKRYGVLELWEIIVIALFAAFIVILV. Residues 36-123 are Extracellular-facing; that stretch reads LSVWLSFRKK…LPPSTPSTTA (88 aa). Residue asparagine 50 is glycosylated (N-linked (GlcNAc...) asparagine). Serine 70 carries the post-translational modification Phosphoserine. Asparagine 79 carries an N-linked (GlcNAc...) asparagine glycan. The segment at 102–126 is disordered; that stretch reads GSLEKKPLVGSHLPPSTPSTTAPSP. Residues 124–144 traverse the membrane as a helical segment; that stretch reads PSPLLGLPEVSHIGWGHWFTL. Residues 145-467 are Cytoplasmic-facing; sequence RDLQLATNHF…DNDITTDAKI (323 aa). A Protein kinase domain is found at 154–433; the sequence is FSKESIIGDG…MLESDEYPVM (280 aa). ATP-binding positions include 160 to 168 and lysine 182; that span reads IGDGGYGVV. Residue tyrosine 227 is modified to Phosphotyrosine. Catalysis depends on aspartate 280, which acts as the Proton acceptor. A phosphoserine mark is found at serine 284 and serine 313. A phosphothreonine mark is found at threonine 314 and threonine 319. Tyrosine 327 is subject to Phosphotyrosine. The segment at 413–467 is disordered; that stretch reads DKRPKMSQVARMLESDEYPVMPREERRRRRNQNAETHRESTDTNKDNDITTDAKI. Positions 447–467 are enriched in basic and acidic residues; the sequence is ETHRESTDTNKDNDITTDAKI.

This sequence belongs to the protein kinase superfamily. Ser/Thr protein kinase family.

The protein resides in the cell membrane. It catalyses the reaction L-seryl-[protein] + ATP = O-phospho-L-seryl-[protein] + ADP + H(+). The catalysed reaction is L-threonyl-[protein] + ATP = O-phospho-L-threonyl-[protein] + ADP + H(+). This chain is Probable receptor-like protein kinase At3g17420, found in Arabidopsis thaliana (Mouse-ear cress).